We begin with the raw amino-acid sequence, 276 residues long: F420-dependent methylenetetrahydromethanopterin dehydrogenase (276 aa).

The tract at residues 253-276 is disordered; it reads TVLRTPHGKEGKTLSKKDLLAKPE. Over residues 259–276 the composition is skewed to basic and acidic residues; the sequence is HGKEGKTLSKKDLLAKPE.

The protein belongs to the MTD family. Found to be tightly associated with methyl-coenzyme M methylreductase.

The catalysed reaction is 5,10-methylenetetrahydromethanopterin + oxidized coenzyme F420-(gamma-L-Glu)(n) + 2 H(+) = 5,10-methenyl-5,6,7,8-tetrahydromethanopterin + reduced coenzyme F420-(gamma-L-Glu)(n). It functions in the pathway one-carbon metabolism; methanogenesis from CO(2); 5,10-methylene-5,6,7,8-tetrahydromethanopterin from 5,10-methenyl-5,6,7,8-tetrahydromethanopterin (coenzyme F420 route): step 1/1. Its activity is regulated as follows. Activity requires salt; 100 mM sodium or potassium salts of chloride, phosphate or sulfate are equally effective. Not inactivated by O(2). Inhibited by hydrogen-producing 5,10-methenyltetrahydromethanopterin hydrogenase which has a higher affinity for their shared substrate. Enzyme is O(2)-stable and strictly dependent on coenzyme F420. Catalyzes the reversible reduction of methenyl-H(4)MPT(+) to methylene-H(4)MPT. The protein is F420-dependent methylenetetrahydromethanopterin dehydrogenase of Methanothermobacter marburgensis (strain ATCC BAA-927 / DSM 2133 / JCM 14651 / NBRC 100331 / OCM 82 / Marburg) (Methanobacterium thermoautotrophicum).